We begin with the raw amino-acid sequence, 484 residues long: Deoxyribodipyrimidine photo-lyase (484 aa).

The region spanning 3–132 is the Photolyase/cryptochrome alpha/beta domain; sequence APILFWHRRD…RAVQLWDQLL (130 aa). Residues 36–38, Arg-51, and 101–109 each bind coenzyme F420-(gamma-Glu)n; these read CLD and DIEPYGRDR. The interval 141 to 148 is DNA-binding; it reads GSGNPYSV. Tyr-228 lines the FAD pocket. Arg-232 is a binding site for DNA. 240 to 247 serves as a coordination point for FAD; that stretch reads TSGLSPAL. A coenzyme F420-(gamma-Glu)n-binding site is contributed by Lys-248. Interaction with DNA stretches follow at residues 283–290 and 349–350; these read ELAWREFY and NR. FAD contacts are provided by residues 346 to 352, 380 to 382, and Asn-386; these read WMHNRCW and DGD. DNA-binding residues include Gln-411 and Lys-472.

The protein belongs to the DNA photolyase class-1 family. As to quaternary structure, monomer. The cofactor is FAD. Requires coenzyme F420-(gamma-Glu)n as cofactor.

The catalysed reaction is cyclobutadipyrimidine (in DNA) = 2 pyrimidine residues (in DNA).. Its function is as follows. Involved in repair of UV radiation-induced DNA damage. Catalyzes the light-dependent monomerization (300-600 nm) of cyclobutyl pyrimidine dimers (in cis-syn configuration), which are formed between adjacent bases on the same DNA strand upon exposure to ultraviolet radiation. This chain is Deoxyribodipyrimidine photo-lyase (phr), found in Synechococcus sp. (strain ATCC 27144 / PCC 6301 / SAUG 1402/1) (Anacystis nidulans).